Consider the following 733-residue polypeptide: Ribosomal protein S6 kinase alpha-2 (733 aa).

A Protein kinase 1 domain is found at 59-318; the sequence is FELLKVLGQG…VEEIKRHPFF (260 aa). Residues 65-73 and Lys91 contribute to the ATP site; that span reads LGQGSYGKV. The active-site Proton acceptor is the Asp184. The residue at position 218 (Ser218) is a Phosphoserine; by PDPK1. The AGC-kinase C-terminal domain occupies 319 to 388; it reads VTIDWNTLYR…VASSLIQEPS (70 aa). At Ser377 the chain carries Phosphoserine. Residues 415–672 form the Protein kinase 2 domain; that stretch reads YEIKEDIGVG…AMQVLKHPWV (258 aa). ATP is bound by residues 421-429 and Lys444; that span reads IGVGSYSVC. The active-site Proton acceptor is the Asp532.

Belongs to the protein kinase superfamily. AGC Ser/Thr protein kinase family. S6 kinase subfamily. As to quaternary structure, forms a complex with either MAPK1/ERK2 or MAPK3/ERK1 in quiescent cells. Transiently dissociates following mitogenic stimulation. Interacts with FBXO5; cooperate to induce the metaphase arrest of early blastomeres; increases and stabilizes interaction of FBXO5 with CDC20. Mg(2+) is required as a cofactor. In terms of processing, activated by phosphorylation at Ser-218 by PDPK1. Autophosphorylated on Ser-377, as part of the activation process. May be phosphorylated at Thr-356 and Ser-360 by MAPK1/ERK2 and MAPK3/ERK1. Post-translationally, N-terminal myristoylation results in an activated kinase in the absence of added growth factors. Widely expressed with higher expression in lung, skeletal muscle, brain, uterus, ovary, thyroid and prostate.

The protein localises to the nucleus. It localises to the cytoplasm. It catalyses the reaction L-seryl-[protein] + ATP = O-phospho-L-seryl-[protein] + ADP + H(+). The catalysed reaction is L-threonyl-[protein] + ATP = O-phospho-L-threonyl-[protein] + ADP + H(+). Upon extracellular signal or mitogen stimulation, phosphorylated at Thr-570 in the C-terminal kinase domain (CTKD) by MAPK1/ERK2 and MAPK3/ERK1. The activated CTKD then autophosphorylates Ser-377, allowing binding of PDPK1, which in turn phosphorylates Ser-218 in the N-terminal kinase domain (NTDK) leading to the full activation of the protein and subsequent phosphorylation of the substrates by the NTKD. Serine/threonine-protein kinase that acts downstream of ERK (MAPK1/ERK2 and MAPK3/ERK1) signaling and mediates mitogenic and stress-induced activation of transcription factors, regulates translation, and mediates cellular proliferation, survival, and differentiation. May function as tumor suppressor in epithelial ovarian cancer cells. This chain is Ribosomal protein S6 kinase alpha-2 (RPS6KA2), found in Homo sapiens (Human).